Here is a 367-residue protein sequence, read N- to C-terminus: 2-aminoethylphosphonate--pyruvate transaminase (367 aa).

Lys-193 carries the post-translational modification N6-(pyridoxal phosphate)lysine.

It belongs to the class-V pyridoxal-phosphate-dependent aminotransferase family. PhnW subfamily. In terms of assembly, homodimer. The cofactor is pyridoxal 5'-phosphate.

It catalyses the reaction (2-aminoethyl)phosphonate + pyruvate = phosphonoacetaldehyde + L-alanine. Its function is as follows. Involved in phosphonate degradation. This Vibrio vulnificus (strain CMCP6) protein is 2-aminoethylphosphonate--pyruvate transaminase.